Consider the following 199-residue polypeptide: NAD(P)H-quinone oxidoreductase chain 6 (199 aa).

The next 5 helical transmembrane spans lie at 9–29 (IVSF…VVLL), 32–52 (VVYS…LYLL), 61–81 (AQVL…IMLV), 102–122 (LVCA…PWAI), and 143–163 (FLLP…GAIV).

It belongs to the complex I subunit 6 family.

The protein resides in the membrane. It carries out the reaction a plastoquinone + NADH + (n+1) H(+)(in) = a plastoquinol + NAD(+) + n H(+)(out). The catalysed reaction is a plastoquinone + NADPH + (n+1) H(+)(in) = a plastoquinol + NADP(+) + n H(+)(out). NDH-1 shuttles electrons from NAD(P)H, via FMN and iron-sulfur (Fe-S) centers, to quinones in the respiratory chain. The immediate electron acceptor for the enzyme in this species is believed to be plastoquinone. Couples the redox reaction to proton translocation (for every two electrons transferred, four hydrogen ions are translocated across the cytoplasmic membrane), and thus conserves the redox energy in a proton gradient. The chain is NAD(P)H-quinone oxidoreductase chain 6 (ndhG) from Leptolyngbya boryana (Plectonema boryanum).